The following is a 231-amino-acid chain: NADH-ubiquinone oxidoreductase chain 4 (231 aa).

A run of 7 helical transmembrane segments spans residues 1–21, 34–54, 61–80, 84–106, 118–138, 156–176, and 211–231; these read PIAG…YGII, LFIP…LTCL, SLIA…AVII, WGLS…LFCL, ILIL…WWLL, LLIV…LGLS, and LLMI…ELVI.

Belongs to the complex I subunit 4 family.

It localises to the mitochondrion membrane. The catalysed reaction is a ubiquinone + NADH + 5 H(+)(in) = a ubiquinol + NAD(+) + 4 H(+)(out). In terms of biological role, core subunit of the mitochondrial membrane respiratory chain NADH dehydrogenase (Complex I) that is believed to belong to the minimal assembly required for catalysis. Complex I functions in the transfer of electrons from NADH to the respiratory chain. The immediate electron acceptor for the enzyme is believed to be ubiquinone. This Hypnale hypnale (Merrem's hump-nosed viper) protein is NADH-ubiquinone oxidoreductase chain 4 (MT-ND4).